The chain runs to 894 residues: Protein translocase subunit SecA (894 aa).

ATP is bound by residues Gln87, 105 to 109, and Asp512; that span reads GEGKT. The tract at residues 836-870 is disordered; that stretch reads EVEQAERERQAHAEQESSHYHAEGEGQDFSDLHIG. Zn(2+)-binding residues include Cys875, Cys877, Cys886, and His887.

Belongs to the SecA family. As to quaternary structure, monomer and homodimer. Part of the essential Sec protein translocation apparatus which comprises SecA, SecYEG and auxiliary proteins SecDF-YajC and YidC. Zn(2+) is required as a cofactor.

The protein localises to the cell inner membrane. Its subcellular location is the cytoplasm. It carries out the reaction ATP + H2O + cellular proteinSide 1 = ADP + phosphate + cellular proteinSide 2.. Its function is as follows. Part of the Sec protein translocase complex. Interacts with the SecYEG preprotein conducting channel. Has a central role in coupling the hydrolysis of ATP to the transfer of proteins into and across the cell membrane, serving both as a receptor for the preprotein-SecB complex and as an ATP-driven molecular motor driving the stepwise translocation of polypeptide chains across the membrane. This is Protein translocase subunit SecA from Glaesserella parasuis serovar 5 (strain SH0165) (Haemophilus parasuis).